The following is a 142-amino-acid chain: MAAMTVQLDIVSAESSIFSGRVASLQVTGSEGELGIMHGHAPLLSYIKPGMARIVKQDGNEEVFYLSGGLLEVQPSSVSVLADVVMRAKDIDEQAALEAKRRAEAHMATAGADFNYDAAMVELAKAMAQLRVVETIKKNIAR.

Belongs to the ATPase epsilon chain family. In terms of assembly, F-type ATPases have 2 components, CF(1) - the catalytic core - and CF(0) - the membrane proton channel. CF(1) has five subunits: alpha(3), beta(3), gamma(1), delta(1), epsilon(1). CF(0) has three main subunits: a, b and c.

It localises to the cell inner membrane. Its function is as follows. Produces ATP from ADP in the presence of a proton gradient across the membrane. The chain is ATP synthase epsilon chain from Shewanella oneidensis (strain ATCC 700550 / JCM 31522 / CIP 106686 / LMG 19005 / NCIMB 14063 / MR-1).